The chain runs to 634 residues: Calcium up-regulated protein D (634 aa).

Residues 1-23 (MINIEDISKSSNQSEEKQLKSTS) form a disordered region. 2 Ricin B-type lectin domains span residues 27-146 (KPKY…WTTF) and 117-250 (PGNG…WGIN).

It belongs to the cup family.

It is found in the cytoplasm. It localises to the membrane. May play an important role in stabilizing and/or regulating the cell membrane during Ca(2+) stress or certain stages of development. This Dictyostelium discoideum (Social amoeba) protein is Calcium up-regulated protein D (cupD).